Consider the following 501-residue polypeptide: Dipeptide and tripeptide permease B (501 aa).

At 1 to 27 the chain is on the cytoplasmic side; it reads MRPSAPTGLLQQPKPFFMIFFVELWER. The helical transmembrane segment at 28–48 threads the bilayer; that stretch reads FGYYGVQGILAVFFVQQLGFS. Topologically, residues 49–52 are periplasmic; the sequence is QEQS. The helical transmembrane segment at 53-73 threads the bilayer; sequence FITFGAFSALVYGLISVGGYV. The Cytoplasmic portion of the chain corresponds to 74–82; that stretch reads GDHVLGTKR. A helical transmembrane segment spans residues 83–103; it reads TMVLGAIVLVIGYFMTGMSIY. Topologically, residues 104 to 106 are periplasmic; sequence NPD. A helical transmembrane segment spans residues 107-127; it reads LIFYALGTIAVGNCLFKANPA. Residues 128-146 are Cytoplasmic-facing; sequence SLLAKCYERGDPRLDGAFT. A helical transmembrane segment spans residues 147 to 167; it reads LFYMSINIGSLISLSLAPVIA. At 168–172 the chain is on the periplasmic side; sequence DHYGY. Residues 173–193 traverse the membrane as a helical segment; that stretch reads TVTYNLCGVGLVIALLTFFAC. Topologically, residues 194-211 are cytoplasmic; sequence RHMVRDIGSEPDHLPLDY. A helical transmembrane segment spans residues 212–232; it reads GKLLLVLLGSVALVFFCAWLM. A topological domain (periplasmic) is located at residue His233. The chain crosses the membrane as a helical span at residues 234-254; the sequence is HVVIANMVLMTVTLAVVIFFF. Over 255-267 the chain is Cytoplasmic; the sequence is REAFKLDAVARNK. Residues 268 to 288 traverse the membrane as a helical segment; that stretch reads MYVAFVLMLEAVVFYVLYAQM. The Periplasmic portion of the chain corresponds to 289–311; that stretch reads PTSLNFFAINNMHHEMLGMSVNP. Residues 312–332 form a helical membrane-spanning segment; that stretch reads ISFQALNPFWVVVGSPVLAMI. Residues 333 to 350 are Cytoplasmic-facing; it reads YTRLGSKGRDLTMPLKFT. The chain crosses the membrane as a helical span at residues 351-371; sequence LGMLFCSLGFLTAAASGIWFA. Over 372–380 the chain is Periplasmic; sequence DAQGLTSPW. Residues 381-401 form a helical membrane-spanning segment; sequence FMVLIYLFQSLGELMISALGL. Residues 402–411 lie on the Cytoplasmic side of the membrane; the sequence is AMVAALVPQR. Residues 412 to 432 form a helical membrane-spanning segment; it reads LMGFILGMWFLTQAMASLLGG. Residues 433–456 are Periplasmic-facing; the sequence is YVATFTAVPQGVTDPLQTLPIYTD. Residues 457 to 477 form a helical membrane-spanning segment; the sequence is VFGKIGLVTLLVAVVMALMVP. Over 478-501 the chain is Cytoplasmic; sequence WLNRMMHAGQGEEGEDLLSQQAKA.

It belongs to the major facilitator superfamily. Proton-dependent oligopeptide transporter (POT/PTR) (TC 2.A.17) family. DtpB subfamily.

The protein localises to the cell inner membrane. Proton-dependent permease that transports di- and tripeptides. This chain is Dipeptide and tripeptide permease B, found in Aeromonas hydrophila subsp. hydrophila (strain ATCC 7966 / DSM 30187 / BCRC 13018 / CCUG 14551 / JCM 1027 / KCTC 2358 / NCIMB 9240 / NCTC 8049).